We begin with the raw amino-acid sequence, 207 residues long: A disintegrin and metalloproteinase with thrombospondin motifs 5 (207 aa).

Positions 1-74 constitute a Peptidase M12B domain; that stretch reads HAAFTVAHEI…GHGNCLLDLP (74 aa). His-8 contributes to the Zn(2+) binding site. Glu-9 is a catalytic residue. Residues His-12 and His-18 each contribute to the Zn(2+) site. 5 disulfide bridges follow: Cys-24–Cys-53, Cys-95–Cys-117, Cys-106–Cys-127, Cys-112–Cys-146, and Cys-140–Cys-151. The region spanning 83-164 is the Disintegrin domain; it reads ELPGQTYDAS…TKKKYYSTSS (82 aa). N-linked (GlcNAc...) asparagine glycosylation is present at Asn-96. The 41-residue stretch at 165–205 folds into the TSP type-1 domain; sequence HGNWGSWGSWGQCSRSCGGGVQFAYRHCNNPAPKNNGRYCT. C-linked (Man) tryptophan glycans are attached at residues Trp-168 and Trp-171. Residue Ser-180 is glycosylated (O-linked (Fuc...) serine).

Zn(2+) is required as a cofactor. In terms of processing, the precursor is cleaved by furin and PCSK7 outside of the cell. Post-translationally, glycosylated. Can be O-fucosylated by POFUT2 on a serine or a threonine residue found within the consensus sequence C1-X(2)-(S/T)-C2-G of the TSP type-1 repeat domains where C1 and C2 are the first and second cysteine residue of the repeat, respectively. Fucosylated repeats can then be further glycosylated by the addition of a beta-1,3-glucose residue by the glucosyltransferase, B3GALTL. Fucosylation mediates the efficient secretion of ADAMTS family members. Can also be C-glycosylated with one or two mannose molecules on tryptophan residues within the consensus sequence W-X-X-W of the TPRs, and N-glycosylated. These other glycosylations can also facilitate secretion.

The protein resides in the secreted. It is found in the extracellular space. The protein localises to the extracellular matrix. Functionally, metalloproteinase that plays an important role in connective tissue organization, development, inflammation and cell migration. Extracellular matrix (ECM) degrading enzyme that shows proteolytic activity toward the hyalectan group of chondroitin sulfate proteoglycans (CSPGs) including ACAN, VCAN, BCAN and NCAN. Cleavage within the hyalectans occurs at Glu-Xaa recognition motifs. Plays a role in embryonic development, including limb and cardiac morphogenesis, and skeletal muscle development through its VCAN remodeling properties. Cleaves VCAN in the pericellular matrix surrounding myoblasts, facilitating myoblast contact and fusion which is required for skeletal muscle development and regeneration. Participates in the development of brown adipose tissue and browning of white adipose tissue. Plays an important role for T-lymphocyte migration from draining lymph nodes following viral infection. This Bos taurus (Bovine) protein is A disintegrin and metalloproteinase with thrombospondin motifs 5 (ADAMTS5).